The chain runs to 433 residues: Enolase (433 aa).

Glutamine 167 lines the (2R)-2-phosphoglycerate pocket. Residue glutamate 209 is the Proton donor of the active site. Aspartate 246, glutamate 291, and aspartate 318 together coordinate Mg(2+). The (2R)-2-phosphoglycerate site is built by lysine 343, arginine 372, serine 373, and lysine 394. The active-site Proton acceptor is the lysine 343.

The protein belongs to the enolase family. As to quaternary structure, component of the RNA degradosome, a multiprotein complex involved in RNA processing and mRNA degradation. Requires Mg(2+) as cofactor.

The protein localises to the cytoplasm. It localises to the secreted. It is found in the cell surface. It carries out the reaction (2R)-2-phosphoglycerate = phosphoenolpyruvate + H2O. Its pathway is carbohydrate degradation; glycolysis; pyruvate from D-glyceraldehyde 3-phosphate: step 4/5. Catalyzes the reversible conversion of 2-phosphoglycerate (2-PG) into phosphoenolpyruvate (PEP). It is essential for the degradation of carbohydrates via glycolysis. The polypeptide is Enolase (Vibrio vulnificus (strain CMCP6)).